A 158-amino-acid chain; its full sequence is Transcription elongation factor GreA (158 aa).

The protein belongs to the GreA/GreB family.

Functionally, necessary for efficient RNA polymerase transcription elongation past template-encoded arresting sites. The arresting sites in DNA have the property of trapping a certain fraction of elongating RNA polymerases that pass through, resulting in locked ternary complexes. Cleavage of the nascent transcript by cleavage factors such as GreA or GreB allows the resumption of elongation from the new 3'terminus. GreA releases sequences of 2 to 3 nucleotides. This chain is Transcription elongation factor GreA, found in Rhizobium etli (strain ATCC 51251 / DSM 11541 / JCM 21823 / NBRC 15573 / CFN 42).